The chain runs to 729 residues: Phosphoribosylformylglycinamidine synthase subunit PurL (729 aa).

The active site involves histidine 54. 2 residues coordinate ATP: tyrosine 57 and lysine 96. Glutamate 98 is a binding site for Mg(2+). Substrate is bound by residues 99-102 and arginine 121; that span reads SHNH. The active-site Proton acceptor is histidine 100. Aspartate 122 serves as a coordination point for Mg(2+). Glutamine 245 provides a ligand contact to substrate. Residue aspartate 273 coordinates Mg(2+). 317-319 serves as a coordination point for substrate; the sequence is ETQ. ATP-binding residues include aspartate 495 and glycine 532. Asparagine 533 contacts Mg(2+). Serine 535 lines the substrate pocket.

Belongs to the FGAMS family. Monomer. Part of the FGAM synthase complex composed of 1 PurL, 1 PurQ and 2 PurS subunits.

It is found in the cytoplasm. It catalyses the reaction N(2)-formyl-N(1)-(5-phospho-beta-D-ribosyl)glycinamide + L-glutamine + ATP + H2O = 2-formamido-N(1)-(5-O-phospho-beta-D-ribosyl)acetamidine + L-glutamate + ADP + phosphate + H(+). It functions in the pathway purine metabolism; IMP biosynthesis via de novo pathway; 5-amino-1-(5-phospho-D-ribosyl)imidazole from N(2)-formyl-N(1)-(5-phospho-D-ribosyl)glycinamide: step 1/2. Functionally, part of the phosphoribosylformylglycinamidine synthase complex involved in the purines biosynthetic pathway. Catalyzes the ATP-dependent conversion of formylglycinamide ribonucleotide (FGAR) and glutamine to yield formylglycinamidine ribonucleotide (FGAM) and glutamate. The FGAM synthase complex is composed of three subunits. PurQ produces an ammonia molecule by converting glutamine to glutamate. PurL transfers the ammonia molecule to FGAR to form FGAM in an ATP-dependent manner. PurS interacts with PurQ and PurL and is thought to assist in the transfer of the ammonia molecule from PurQ to PurL. The polypeptide is Phosphoribosylformylglycinamidine synthase subunit PurL (Staphylococcus saprophyticus subsp. saprophyticus (strain ATCC 15305 / DSM 20229 / NCIMB 8711 / NCTC 7292 / S-41)).